Reading from the N-terminus, the 121-residue chain is Small ribosomal subunit protein bS16 (121 aa).

Residues 97–114 (LAKAKTKDGDNDSSKAES) show a composition bias toward basic and acidic residues. A disordered region spans residues 97 to 121 (LAKAKTKDGDNDSSKAESESNEAET).

This sequence belongs to the bacterial ribosomal protein bS16 family.

This is Small ribosomal subunit protein bS16 from Prochlorococcus marinus (strain MIT 9301).